Here is a 138-residue protein sequence, read N- to C-terminus: Large ribosomal subunit protein uL16 (138 aa).

The span at 1–16 shows a compositional bias: basic residues; sequence MLIPRRVKHRKQHHPS. The tract at residues 1 to 25 is disordered; that stretch reads MLIPRRVKHRKQHHPSRSGAAKGGT.

The protein belongs to the universal ribosomal protein uL16 family. In terms of assembly, part of the 50S ribosomal subunit.

Its function is as follows. Binds 23S rRNA and is also seen to make contacts with the A and possibly P site tRNAs. In Rhodococcus jostii (strain RHA1), this protein is Large ribosomal subunit protein uL16.